Here is a 267-residue protein sequence, read N- to C-terminus: Tryptophan synthase alpha chain (267 aa).

Active-site proton acceptor residues include Glu-49 and Asp-60.

The protein belongs to the TrpA family. Tetramer of two alpha and two beta chains.

It catalyses the reaction (1S,2R)-1-C-(indol-3-yl)glycerol 3-phosphate + L-serine = D-glyceraldehyde 3-phosphate + L-tryptophan + H2O. Its pathway is amino-acid biosynthesis; L-tryptophan biosynthesis; L-tryptophan from chorismate: step 5/5. The alpha subunit is responsible for the aldol cleavage of indoleglycerol phosphate to indole and glyceraldehyde 3-phosphate. The protein is Tryptophan synthase alpha chain of Chloroflexus aggregans (strain MD-66 / DSM 9485).